The sequence spans 822 residues: Calpain-3 (822 aa).

The disordered stretch occupies residues 1-36 (MPTVISASVAPRTGAEPRSPGPIAQAAQGKGTEAGG). Positions 74 to 418 (LFVDPEFPPD…FTKLEICNLT (345 aa)) constitute a Calpain catalytic domain. Residues Cys129, His335, and Asn359 contribute to the active site. The segment at 419–587 (ADALESDKLQ…KRNLSEEVEN (169 aa)) is domain III. Positions 588 to 649 (TISVDRPVKK…LKPGNIDQES (62 aa)) are linker. The segment at 600-651 (PKPIIFGSDRANSNKELGVDQESEEGKDNTSPDKQAKSPQLKPGNIDQESKE) is disordered. Residues 623 to 635 (EEGKDNTSPDKQA) are compositionally biased toward basic and acidic residues. EF-hand domains follow at residues 650–684 (KEQR…VVNK), 693–726 (FTLE…KKIK), 723–758 (KKIK…AGFH), and 788–822 (VRLE…TMYA). The interval 650–822 (KEQRQFRNIF…LEWLQLTMYA (173 aa)) is domain IV. Residues Ala663, Asp666, Glu668, Glu673, Asp706, Asp708, Ser710, Arg712, Glu717, Asp736, Asp738, Ser740, Thr742, Glu747, Asp801, Asp803, Asp805, and Ile807 each coordinate Ca(2+).

Belongs to the peptidase C2 family. As to quaternary structure, homodimer; via EF-hand domain 4. Interacts with TTN/titin. Interacts with CMYA5; this interaction, which results in CMYA5 proteolysis, may protect CAPN3 from autolysis. Interacts with SIMC1. Interacts with UTP25; the interaction is required for CAPN3 translocation to the nucleolus. As to expression, skeletal muscle.

The protein resides in the cytoplasm. It localises to the nucleus. The protein localises to the nucleolus. The catalysed reaction is Broad endopeptidase activity.. Its activity is regulated as follows. Activated by micromolar concentrations of calcium and inhibited by calpastatin. Functionally, calcium-regulated non-lysosomal thiol-protease. Proteolytically cleaves CTBP1. Mediates, with UTP25, the proteasome-independent degradation of p53/TP53. This chain is Calpain-3 (CAPN3), found in Ovis aries (Sheep).